The sequence spans 164 residues: Protein SprT (164 aa).

The 143-residue stretch at 14-156 folds into the SprT-like domain; the sequence is QQAETFFKRP…LCRRCREILV (143 aa). Histidine 69 serves as a coordination point for Zn(2+). Residue glutamate 70 is part of the active site. A Zn(2+)-binding site is contributed by histidine 73.

The protein belongs to the SprT family. Requires Zn(2+) as cofactor.

The protein resides in the cytoplasm. The sequence is that of Protein SprT from Pseudomonas entomophila (strain L48).